Reading from the N-terminus, the 306-residue chain is UPF0282 protein Pars_1056 (306 aa).

The protein belongs to the UPF0282 family.

In Pyrobaculum arsenaticum (strain DSM 13514 / JCM 11321 / PZ6), this protein is UPF0282 protein Pars_1056.